The primary structure comprises 179 residues: Replication restart protein DnaT (179 aa).

A disordered region spans residues 156–179 (GGLPKRDVNTVSEPDSQIPPGFRG).

Belongs to the DnaT family. As to quaternary structure, homooligomerizes. Interacts with PriB. Component of the replication restart primosome. Primosome assembly occurs via a 'hand-off' mechanism. PriA binds to replication forks, subsequently PriB then DnaT bind; DnaT then displaces ssDNA to generate the helicase loading substrate.

In terms of biological role, involved in the restart of stalled replication forks, which reloads the replicative helicase on sites other than the origin of replication. Can function in multiple replication restart pathways. Displaces ssDNA from a PriB-ssDNA complex. Probably forms a spiral filament on ssDNA. The protein is Replication restart protein DnaT of Shigella boydii serotype 18 (strain CDC 3083-94 / BS512).